Reading from the N-terminus, the 41-residue chain is Omega-theraphotoxin-Hg1a (41 aa).

Disulfide bonds link C7-C21, C14-C26, and C20-C33.

Belongs to the neurotoxin 10 (Hwtx-1) family. 56 (SNX-482) subfamily. Expressed by the venom gland.

It is found in the secreted. Functionally, toxin that blocks vertebrate P/Q-type (Cav2.1/CACNA1A) and R-type (Cav2.3/CACNA1E) voltage-gated calcium channels. Also inhibits sodium channels (Nav) in bovine chromaffin cells by delaying sodium channel inactivation. This chain is Omega-theraphotoxin-Hg1a, found in Hysterocrates gigas (Cameroon red baboon tarantula).